A 406-amino-acid chain; its full sequence is Acetylornithine aminotransferase (406 aa).

Residues 108-109 (GA) and phenylalanine 141 each bind pyridoxal 5'-phosphate. Arginine 144 provides a ligand contact to N(2)-acetyl-L-ornithine. Position 226 to 229 (226 to 229 (DEVQ)) interacts with pyridoxal 5'-phosphate. Lysine 255 carries the N6-(pyridoxal phosphate)lysine modification. Threonine 283 contributes to the N(2)-acetyl-L-ornithine binding site. Threonine 284 contributes to the pyridoxal 5'-phosphate binding site.

The protein belongs to the class-III pyridoxal-phosphate-dependent aminotransferase family. ArgD subfamily. As to quaternary structure, homodimer. Pyridoxal 5'-phosphate serves as cofactor.

The protein resides in the cytoplasm. It carries out the reaction N(2)-acetyl-L-ornithine + 2-oxoglutarate = N-acetyl-L-glutamate 5-semialdehyde + L-glutamate. It participates in amino-acid biosynthesis; L-arginine biosynthesis; N(2)-acetyl-L-ornithine from L-glutamate: step 4/4. In Pseudomonas putida (strain ATCC 47054 / DSM 6125 / CFBP 8728 / NCIMB 11950 / KT2440), this protein is Acetylornithine aminotransferase.